We begin with the raw amino-acid sequence, 392 residues long: Neutrophil cytosol factor 1 (392 aa).

A PX domain is found at 4–125; sequence HFIRHIALLG…NFFKVRPDDL (122 aa). SH3 domains lie at 156 to 215 and 226 to 285; these read IILQ…PLDS and YAGE…KAGQ. The tract at residues 290-392 is disordered; sequence AKSQIKSRGA…STKRKLASAV (103 aa). Phosphoserine occurs at positions 304 and 305. Over residues 310-319 the composition is skewed to basic residues; sequence HSIHQRSRKR. Residues Ser-321, Ser-329, and Ser-348 each carry the phosphoserine modification. Residues 376–385 are compositionally biased toward basic and acidic residues; sequence ILHRCSESTK.

Component of the phagocyte NADPH oxidase complex composed of an obligatory core heterodimer formed by the membrane proteins CYBA and CYBB and the cytosolic regulatory subunits NCF1/p47-phox, NCF2/p67-phox, NCF4/p40-phox and the small GTPase RAC1 or RAC2. Part of a cytosolic complex composed at least by NCF1, NCF2 and NCF4. Interacts (via C-terminus) with NCF2 (via the C-terminal SH3 domain). Interacts with NCF4. Interacts with CYBB. Interacts (via the second SH3 domain) with CYBA; interaction is phosphorylation-dependent. Interacts with NOXA1. Interacts with ADAM15. Interacts with TRAF4. Interacts with FASLG. Interacts with PARK7 (via C-terminus); the interaction is enhanced by LPS and modulates NCF1 phosphorylation and membrane translocation. Post-translationally, phosphorylated by PRKCD; phosphorylation induces activation of NCF1, leading to assembly and activation of the NADPH oxidase complex.

It localises to the cytoplasm. Its subcellular location is the cytosol. It is found in the membrane. Functionally, subunit of the phagocyte NADPH oxidase complex that mediates the transfer of electrons from cytosolic NADPH to O2 to produce the superoxide anion (O2(-)). In the activated complex, electrons are first transferred from NADPH to flavin adenine dinucleotide (FAD) and subsequently transferred via two heme molecules to molecular oxygen, producing superoxide through an outer-sphere reaction. Activation of the NADPH oxidase complex is initiated by the assembly of cytosolic subunits of the NADPH oxidase complex with the core NADPH oxidase complex to form a complex at the plasma membrane or phagosomal membrane. This activation process is initiated by phosphorylation dependent binding of the cytosolic NCF1/p47-phox subunit to the C-terminus of CYBA/p22-phox. This is Neutrophil cytosol factor 1 from Bos taurus (Bovine).